The following is a 1772-amino-acid chain: Gag-Pro-Pol polyprotein (1772 aa).

Glycine 2 carries the N-myristoyl glycine; by host lipid modification. Residues 101-162 constitute a propeptide that is removed on maturation; it reads AAVAQTEEIL…TKKPKRFPVL (62 aa). Over residues 113-126 the composition is skewed to polar residues; it reads SSHTELTTKPSQNP. The segment at 113–149 is disordered; it reads SSHTELTTKPSQNPDLDLISLDSDDEGAKGSSLKDKN. A compositionally biased stretch (basic and acidic residues) spans 138–149; sequence EGAKGSSLKDKN. The PPXY motif signature appears at 203 to 206; the sequence is PPPY. The PTAP/PSAP motif motif lies at 211–214; the sequence is PSAP. A coiled-coil region spans residues 217–258; it reads MAVVNPKEELKEKIAQLEEQIKLEELHQALISKLQKLKTGNE. Residues 258–282 are disordered; that stretch reads ETVTSPETAGGFSRTPHWPGQHIPK. A CCHC-type zinc finger spans residues 548–565; that stretch reads GCCFKCGRKGHFAKNCHE. Positions 593 to 626 are disordered; that stretch reads KSKTDSQGNPLPPHQGNRTEGPAPGPETSLWGGQ. A Peptidase A2 domain is found at 781-857; sequence FTGLIDTGAD…LPVNLWGRDL (77 aa). Residue aspartate 786 is the Protease; shared with dimeric partner of the active site. The 47-residue stretch at 868-914 folds into the G-patch domain; the sequence is PSDIVTAQMLAQGYSPGKGLGKNENGILHPIPNQGQFDKKGFGNFLT. One can recognise a Reverse transcriptase domain in the interval 960–1148; the sequence is LEAGHITESN…DPYTYLGFEL (189 aa). Mg(2+)-binding residues include aspartate 1025, aspartate 1100, aspartate 1101, aspartate 1371, glutamate 1400, aspartate 1421, and aspartate 1485. The RNase H type-1 domain maps to 1362–1493; that stretch reads LNNALLVFTD…ADLATKTVAS (132 aa). The Integrase-type zinc finger occupies 1497–1538; sequence TNLESAQNAHTLHHLNAQTLKLMFNIPREQARQIVRQCPICA. Positions 1506, 1510, 1534, and 1537 each coordinate Zn(2+). An Integrase catalytic domain is found at 1551–1720; that stretch reads RGLLPNMIWQ…NPRKQFAMVK (170 aa). 3 residues coordinate Mg(2+): aspartate 1562, aspartate 1619, and glutamate 1655. Positions 1717–1766 form a DNA-binding region, integrase-type; sequence AMVKWKDPLDNTWPWPDPVIIWGRGSVCVYSQTHDAARWLPERLVKQIPN.

It belongs to the retroviral Pol polyprotein family. In terms of assembly, homodimer. As to quaternary structure, interacts with the G-patch peptide. Interacts with the reverse transcriptase/ribonuclease H. In terms of assembly, homotrimer. Mg(2+) is required as a cofactor. In terms of processing, released by autocatalytic processing. The protease can undergo further autoprocessing to yield 2 shorter but enzymatically active forms of 12 kDa and 13 kDa. Post-translationally, myristoylated. Myristoylation of the matrix (MA) domain mediates the transport and binding of Gag polyproteins to the host plasma membrane and is required for the assembly of viral particles. Specific enzymatic cleavages in vivo yield mature proteins.

It is found in the virion. The catalysed reaction is DNA(n) + a 2'-deoxyribonucleoside 5'-triphosphate = DNA(n+1) + diphosphate. It catalyses the reaction Endonucleolytic cleavage to 5'-phosphomonoester.. It carries out the reaction dUTP + H2O = dUMP + diphosphate + H(+). Matrix protein. Its function is as follows. Nucleocapsid protein p14: Nucleocapsid protein. In terms of biological role, capsid protein. Functionally, the aspartyl protease mediates proteolytic cleavages of Gag and Gag-Pol polyproteins during or shortly after the release of the virion from the plasma membrane. Cleavages take place as an ordered, step-wise cascade to yield mature proteins. This process is called maturation. Displays maximal activity during the budding process just prior to particle release from the cell. Enhances the activity of the reverse transcriptase. May be part of the mature RT. Its function is as follows. RT is a multifunctional enzyme that converts the viral dimeric RNA genome into dsDNA in the cytoplasm, shortly after virus entry into the cell. This enzyme displays a DNA polymerase activity that can copy either DNA or RNA templates, and a ribonuclease H (RNase H) activity that cleaves the RNA strand of RNA-DNA heteroduplexes in a partially processive 3' to 5' endonucleasic mode. Conversion of viral genomic RNA into dsDNA requires many steps. A tRNA binds to the primer-binding site (PBS) situated at the 5' end of the viral RNA. RT uses the 3' end of the tRNA primer to perfom a short round of RNA-dependent minus-strand DNA synthesis. The reading proceeds through the U5 region and ends after the repeated (R) region which is present at both ends of viral RNA. The portion of the RNA-DNA heteroduplex is digested by the RNase H, resulting in a ssDNA product attached to the tRNA primer. This ssDNA/tRNA hybridizes with the identical R region situated at the 3' end of viral RNA. This template exchange, known as minus-strand DNA strong stop transfer, can be either intra- or intermolecular. RT uses the 3' end of this newly synthesized short ssDNA to perfom the RNA-dependent minus-strand DNA synthesis of the whole template. RNase H digests the RNA template except for a polypurine tract (PPT) situated at the 5' end of the genome. It is not clear if both polymerase and RNase H activities are simultaneous. RNase H probably can proceed both in a polymerase-dependent (RNA cut into small fragments by the same RT performing DNA synthesis) and a polymerase-independent mode (cleavage of remaining RNA fragments by free RTs). Secondly, RT performs DNA-directed plus-strand DNA synthesis using the PPT that has not been removed by RNase H as primers. PPT and tRNA primers are then removed by RNase H. The 3' and 5' ssDNA PBS regions hybridize to form a circular dsDNA intermediate. Strand displacement synthesis by RT to the PBS and PPT ends produces a blunt ended, linear dsDNA copy of the viral genome that includes long terminal repeats (LTRs) at both ends. In terms of biological role, catalyzes viral DNA integration into the host chromosome, by performing a series of DNA cutting and joining reactions. The sequence is that of Gag-Pro-Pol polyprotein (pol) from Macaca mulatta (Rhesus macaque).